The following is a 312-amino-acid chain: MRIPVLHDFFIKEQLKSCVSGAVLFDEPLDRYTSMGVGGPADALVVPQSMEELVQLVRFLRKENIPFLTLGNGTNLIVRDGGCRGVVVALRGLQKLSWASDPEGKIRVQAEAGVPLASIVQLCIKESLAGLEFCTGIPGSVGGAVRMNAGAFGREMKDVVTAITVLNEHLELETLSRRELSFEYRRLNLSDEAVIVCAEFALCPGERESISAEISEILALRKSKHPLNFRNAGSIFKNPRNLPAGQLIEETGLKGTRRGDAMISEKHGNFIVNLGHARAADVVDLIEEIKGRVENCRAIQLEAEVHIVGEDG.

The FAD-binding PCMH-type domain occupies valine 37 to glycine 205. Arginine 185 is a catalytic residue. Serine 234 serves as the catalytic Proton donor. Glutamate 304 is an active-site residue.

It belongs to the MurB family. FAD serves as cofactor.

It is found in the cytoplasm. The enzyme catalyses UDP-N-acetyl-alpha-D-muramate + NADP(+) = UDP-N-acetyl-3-O-(1-carboxyvinyl)-alpha-D-glucosamine + NADPH + H(+). It functions in the pathway cell wall biogenesis; peptidoglycan biosynthesis. Cell wall formation. This Syntrophus aciditrophicus (strain SB) protein is UDP-N-acetylenolpyruvoylglucosamine reductase.